The sequence spans 390 residues: L-seryl-tRNA(Sec) selenium transferase (390 aa).

Position 225 is an N6-(pyridoxal phosphate)lysine (Lys225).

The protein belongs to the SelA family. Pyridoxal 5'-phosphate serves as cofactor.

Its subcellular location is the cytoplasm. The enzyme catalyses L-seryl-tRNA(Sec) + selenophosphate + H(+) = L-selenocysteinyl-tRNA(Sec) + phosphate. Its pathway is aminoacyl-tRNA biosynthesis; selenocysteinyl-tRNA(Sec) biosynthesis; selenocysteinyl-tRNA(Sec) from L-seryl-tRNA(Sec) (bacterial route): step 1/1. Functionally, converts seryl-tRNA(Sec) to selenocysteinyl-tRNA(Sec) required for selenoprotein biosynthesis. The polypeptide is L-seryl-tRNA(Sec) selenium transferase (Helicobacter pylori (strain J99 / ATCC 700824) (Campylobacter pylori J99)).